A 409-amino-acid polypeptide reads, in one-letter code: uncharacterized protein (409 aa).

A run of 10 helical transmembrane segments spans residues 18–38 (ALSAWRFVTVFGVVGLLADVV), 47–67 (GPLLASLGATGLVVGVVTGVG), 100–120 (VVTVPLLGIAGALWVACALVI), 159–179 (VGAMIGPLTVAGMLAITGNAY), 180–200 (APALGVLTLPGGAALALLLWL), 232–252 (FWLYCGFTAITMLGFGTFGLL), 260–280 (GVLAAAMVPVVYAAAMAADAL), 302–322 (ILSILVVLFAFTDNVTMVVIG), 355–375 (GVFAAGLGAATAGGGALIGWL), and 380–400 (IGTLVVVVIALELMALVMMFA).

The protein resides in the cell membrane. This is an uncharacterized protein from Mycobacterium tuberculosis (strain CDC 1551 / Oshkosh).